Here is an 82-residue protein sequence, read N- to C-terminus: Exodeoxyribonuclease 7 small subunit (82 aa).

This sequence belongs to the XseB family. Heterooligomer composed of large and small subunits.

The protein localises to the cytoplasm. It carries out the reaction Exonucleolytic cleavage in either 5'- to 3'- or 3'- to 5'-direction to yield nucleoside 5'-phosphates.. Functionally, bidirectionally degrades single-stranded DNA into large acid-insoluble oligonucleotides, which are then degraded further into small acid-soluble oligonucleotides. The sequence is that of Exodeoxyribonuclease 7 small subunit from Colwellia psychrerythraea (strain 34H / ATCC BAA-681) (Vibrio psychroerythus).